We begin with the raw amino-acid sequence, 1018 residues long: MSLQFQNDCGDSVKQAIIEELQNLLSSDTGVLQQTEKRIKQLEYTEGYGVYLSEIIMNQAHELPLRQIAIVMLTRYVENHWTDDDDVKRKANGCMASEQAKRTIRNILPNGLYDPNSKIRSSVAHTISTIAATDYPHCWAELFDIIVKCLGGNEDSIHGAMQVLQDFSYDVEQIKELGPVVIPEVYRIFDSEQNYSIKTRVSAIRILKPLFASIAALITNKEEQSTMMSSILTNFMDKLMHYLSMNSGAVSSFLLRTEIIKVFTHLVNEMPKYINPFMDRVLPIVWQLLTQIAETYVKVSVNQTETSPLASGDSEEDDEQTNFQSLIIQILEFINCILTCNKLRGSIKNVLADLIYITIVYIQLSEEQLEDWHDDPEKFVDDEDDGGVELTVRMCGRDVLLAINDEFGANAIQPLQEALGRHFSVADAEKAANNPNWWKIQEACMDAVHAFRDVILAGDSTFDLLNYLTIVRNLLVHQESPPLVGRALWTLSIYSKSDLYNPQMLTEILDVTLCSLSPEKSHILRISAVRTLNGFLQANETIDGEKRTLLVSKLPGFLDGIMALVPGSKAAVLALLMEALTFMVKFDAEFAFASQAKITPLAIAVFLKYTEDPYVLETVQDLIKALCQRKECLGPLQEKFIPTIVSILGLTGAASTEKQDIALDVLNTIVRYTEPPLNNSLLETAFPAIINCVLHTDDHAVMVAGGECLRSFINVSPEQICSYKNGEGINCIMQVVATVLLNPMNSEMTAAGQIGRLVITIITKMGSMLGQNVDMLLKAVISKMQNLECLKVIMNLVLIFAHLFLTQMDAVLNFLSTVPGPNGEPAMQFVLTNWLSRQNSFFGNYERKVTTMALCKLFEYGVATQDNRLTTITFKELVDDPTDTRRRTRSVAATTQKWVTIPALVKIFKVLISEYQHFQEGKSDEPLTDSEEDGDDEDAPGNPDKPRYISDLFESDEDNAEDEQLLQELLKETNYQGDIADNLQKFLTTFTQNEHFPTFYEHLTEGERLILLSKVQQK.

Residues 35-114 (TEKRIKQLEY…RNILPNGLYD (80 aa)) enclose the Importin N-terminal domain. The interval 921–950 (GKSDEPLTDSEEDGDDEDAPGNPDKPRYIS) is disordered. The segment covering 926 to 939 (PLTDSEEDGDDEDA) has biased composition (acidic residues).

It belongs to the importin beta family.

It is found in the cytoplasm. It localises to the nucleus. Nuclear transport receptor that mediates nuclear import of proteins. Serves as receptor for nuclear localization signals (NLS) in cargo substrates. Is thought to mediate docking of the importin/substrate complex to the nuclear pore complex (NPC) through binding to nucleoporin and the complex is subsequently translocated through the pore by an energy requiring, Ran-dependent mechanism. Mediates the import of pre-assembled proteasomes into the nucleus during the late stages of sperm development. The chain is Importin-9 from Drosophila melanogaster (Fruit fly).